Consider the following 382-residue polypeptide: Sialidase (382 aa).

R37 provides a ligand contact to substrate. C42 and C103 form a disulfide bridge. Residue D62 is the Proton acceptor of the active site. BNR repeat units follow at residues 71–82 (ARSTDGGKTWNK), 145–156 (YKSTDDGVTFSK), and 210–220 (IYSTDGITWSL). Residue R246 coordinates substrate. Residues 254-265 (FETKDFGKTWTE) form a BNR 4 repeat. R309 contacts substrate. The active-site Nucleophile is the Y342. E361 is an active-site residue.

The protein belongs to the glycosyl hydrolase 33 family. Monomer.

The catalysed reaction is Hydrolysis of alpha-(2-&gt;3)-, alpha-(2-&gt;6)-, alpha-(2-&gt;8)- glycosidic linkages of terminal sialic acid residues in oligosaccharides, glycoproteins, glycolipids, colominic acid and synthetic substrates.. In terms of biological role, cleaves the terminal sialic acid (N-acetyl neuraminic acid) from carbohydrate chains in glycoproteins providing free sialic acid which can be used as carbon and energy sources. Sialidases have been suggested to be pathogenic factors in microbial infections. The chain is Sialidase (nanH) from Salmonella typhimurium (strain LT2 / SGSC1412 / ATCC 700720).